We begin with the raw amino-acid sequence, 387 residues long: Diphthine methyltransferase (387 aa).

5 WD repeats span residues 62–102 (NTYG…KDDF), 119–159 (EKDV…VQFT), 195–237 (PHEL…FIWS), 241–286 (IHDA…ESIF), and 357–387 (GHDS…TWIV).

This sequence belongs to the DPH7 family. In terms of assembly, interacts with CAN1 and RTT10.

The protein localises to the cytoplasm. It is found in the endosome. It carries out the reaction diphthine methyl ester-[translation elongation factor 2] + H2O = diphthine-[translation elongation factor 2] + methanol + H(+). Its pathway is protein modification; peptidyl-diphthamide biosynthesis. In terms of biological role, catalyzes the demethylation of diphthine methyl ester to form diphthine, an intermediate in diphthamide biosynthesis, a post-translational modification of histidine which occurs in translation elongation factor 2 (EFT1 and EFT2). Also plays a role in the regulation of the retromer complex and is required for the recycling from endosomes of plasma membrane proteins like CAN1 and MUP1. Identified in a screen for mutants with decreased levels of rDNA transcription. This chain is Diphthine methyltransferase (RRT2), found in Saccharomyces cerevisiae (strain ATCC 204508 / S288c) (Baker's yeast).